The primary structure comprises 1149 residues: Bone sialoprotein-binding protein (1149 aa).

An N-terminal signal peptide occupies residues 1–52; it reads MINRDNKKAITKKGMISNRLNKFSIRKYTVGTASILVGTTLIFGLGNQEAKA. The interval 53-601 is ligand binding A region; that stretch reads AENTSTENAK…GDGTVKPEEK (549 aa). Disordered regions lie at residues 54-249 and 675-697; these read ENTS…TAPT and LPTK…VTVK. Positions 61–75 are enriched in basic and acidic residues; it reads AKQDEASASDNKEVV. Positions 77–89 are enriched in polar residues; it reads ETENNSTQKNDLT. The segment covering 92-106 has biased composition (basic and acidic residues); the sequence is IKKETNTDSHQEAKE. Residues 109–126 show a composition bias toward low complexity; the sequence is TTSSTQQQQNNATTSTET. A compositionally biased stretch (basic and acidic residues) spans 130–145; sequence NIEKENVKPSTDKTAT. Over residues 158-205 the composition is skewed to polar residues; that stretch reads PNNTNNDVTTKPSTSEIQTTPTTPQESTNIENSQPQPTPSKVDNQVTD. Positions 216–241 are enriched in basic and acidic residues; that stretch reads SKEELKNNPEKLKELVRNDSNTDRST. CNA-B domains lie at 602 to 714, 715 to 824, and 825 to 935; these read LYKI…YKEP, KYNL…YKTP, and KYSL…EEDT. The interval 896-1124 is disordered; sequence TQTGTNTTED…TGSENNGSNN (229 aa). Composition is skewed to acidic residues over residues 903 to 913 and 930 to 1088; these read TEDDKDADGGE and YFEE…DSDS. Residues 1112–1116 carry the LPXTG sorting signal motif; sequence LPETG. The residue at position 1115 (Thr1115) is a Pentaglycyl murein peptidoglycan amidated threonine. Residues 1116–1149 constitute a propeptide, removed by sortase; the sequence is GSENNGSNNATLFGGLFAALGSLLLFGRRKKQNK.

This sequence belongs to the serine-aspartate repeat-containing protein (SDr) family.

The protein localises to the secreted. It is found in the cell wall. Its function is as follows. Specifically interacts with bone sialoprotein (BSP), a glycoprotein of bone and dentin extracellular matrix. Could contribute to staphylococcal osteomyelitis and arthritis. The chain is Bone sialoprotein-binding protein (bbp) from Staphylococcus aureus.